A 297-amino-acid chain; its full sequence is uncharacterized protein (297 aa).

The interval 46–229 is disordered; it reads LGAGGPPPPP…RPPPYIAPPP (184 aa). The span at 65-81 shows a compositional bias: pro residues; it reads PEGPGGPPQHAPPNPPP. Gly residues predominate over residues 90–100; it reads RGGGAGGAGDG. A compositionally biased stretch (acidic residues) spans 106–117; that stretch reads DAAEEYGPEDLD. Residues 137-151 show a composition bias toward basic residues; it reads HQTRGPGRRAKKRLR. Residues 184 to 201 show a composition bias toward low complexity; the sequence is ATPQAAPAAKTTPASPQT. Pro residues predominate over residues 219–229; the sequence is HRPPPYIAPPP.

This is an uncharacterized protein from Torque teno virus (isolate Human/China/CT23F/2001) (TTV).